Consider the following 123-residue polypeptide: PCNA-associated factor (123 aa).

The segment at 1-123 (MVRTKADCAG…SEEAADSGDE (123 aa)) is disordered. Positions 26-37 (RKTFGSSSSGSN) match the D-box motif. The short motif at 66–77 (QKGIGDFFGSPS) is the PIP-box element. The short motif at 83–85 (KEN) is the KEN box element. An Initiation motif motif is present at residues 93 to 105 (EAGGSGAGKKPRK). The segment covering 113–123 (PSEEAADSGDE) has biased composition (acidic residues).

In terms of assembly, interacts with pcna.

It localises to the nucleus. The protein resides in the cytoplasm. The protein localises to the perinuclear region. Functionally, PCNA-binding protein that acts as a regulator of DNA repair during DNA replication. Following DNA damage, the interaction with pcna is disrupted, facilitating the interaction between monoubiquitinated pcna and the translesion DNA synthesis DNA polymerase eta (polh) at stalled replisomes, facilitating the bypass of replication-fork-blocking lesions. Also acts as a regulator of centrosome number. The polypeptide is PCNA-associated factor (Xenopus laevis (African clawed frog)).